A 105-amino-acid chain; its full sequence is Multidrug resistance protein EbrA (105 aa).

4 consecutive transmembrane segments (helical) span residues 2-22, 35-55, 57-77, and 84-104; these read LVGYIFLTIAICSESIGAAML, ALVVIAYSLAFYMLSLTLNHI, LSLSYATWSGVGTVLTAVIGV, and LNAKGLIGILLLISGVVLLNW.

This sequence belongs to the drug/metabolite transporter (DMT) superfamily. Small multidrug resistance (SMR) (TC 2.A.7.1) family. EbrA/EbrB subfamily. In terms of assembly, the efflux pump is composed of EbrA and EbrB.

It is found in the cell membrane. In terms of biological role, part of a multidrug efflux pump. Confers resistance to cationic lipophilic dyes such as ethidium bromide, acriflavine, pyronine Y and safranin O. The efflux is probably coupled to an influx of protons. The polypeptide is Multidrug resistance protein EbrA (ebrA) (Bacillus atrophaeus).